A 117-amino-acid chain; its full sequence is MIDNKHQIPREHGQAGEKLAMNYLAERGLNFVEANVRYKFGEIDLIMKDGKEWIFIEVKYRSKAQYGGALNALSPAQIGRLRRAAEHYIQIHKIDAVCRFDLIAIDASQIHWLPNAF.

Belongs to the UPF0102 family.

The sequence is that of UPF0102 protein Swoo_0351 from Shewanella woodyi (strain ATCC 51908 / MS32).